The primary structure comprises 233 residues: Membrane glycoprotein UL9 (233 aa).

Residues 1–20 form the signal peptide; sequence MSKRLQVFPWITILFYTSKS. N40, N94, N101, N131, and N169 each carry an N-linked (GlcNAc...) asparagine; by host glycan. The chain crosses the membrane as a helical span at residues 194 to 214; sequence MWIIPLVIVITIIVLICFKFP.

Belongs to the HHV-5 UL9 family.

Its subcellular location is the host membrane. The sequence is that of Membrane glycoprotein UL9 (UL9) from Homo sapiens (Human).